The following is an 88-amino-acid chain: Apolipoprotein C-I (88 aa).

A signal peptide spans 1-26 (MRLFLSLPVWVAVLAMVLEGPAPAQA).

The protein belongs to the apolipoprotein C1 family.

It localises to the secreted. Its function is as follows. Inhibitor of lipoprotein binding to the low density lipoprotein (LDL) receptor, LDL receptor-related protein, and very low density lipoprotein (VLDL) receptor. Associates with high density lipoproteins (HDL) and the triacylglycerol-rich lipoproteins in the plasma and makes up about 10% of the protein of the VLDL and 2% of that of HDL. Appears to interfere directly with fatty acid uptake and is also the major plasma inhibitor of cholesteryl ester transfer protein (CETP). Binds free fatty acids and reduces their intracellular esterification. Modulates the interaction of APOE with beta-migrating VLDL and inhibits binding of beta-VLDL to the LDL receptor-related protein. In Ursus maritimus (Polar bear), this protein is Apolipoprotein C-I (APOC1).